Consider the following 204-residue polypeptide: Guanylate kinase (204 aa).

The region spanning 18–196 (PKLFTISAPA…SYEILKSIFI (179 aa)) is the Guanylate kinase-like domain. Position 25-32 (25-32 (APAGAGKT)) interacts with ATP.

This sequence belongs to the guanylate kinase family.

The protein resides in the cytoplasm. The catalysed reaction is GMP + ATP = GDP + ADP. In terms of biological role, essential for recycling GMP and indirectly, cGMP. This Chlamydia caviae (strain ATCC VR-813 / DSM 19441 / 03DC25 / GPIC) (Chlamydophila caviae) protein is Guanylate kinase.